The sequence spans 139 residues: Small ribosomal subunit protein uS9 (139 aa).

This sequence belongs to the universal ribosomal protein uS9 family.

In Coxiella burnetii (strain CbuG_Q212) (Coxiella burnetii (strain Q212)), this protein is Small ribosomal subunit protein uS9.